We begin with the raw amino-acid sequence, 427 residues long: MTAIIDIAAREILDSRGNPTVEVDVTLEDGSHGRAAVPSGASTGAHEAVELRDGDKSRYGGKGVLKAIENVNRDIFEALSGLEAEDQGRIDEIMISLDGTPNKSKLGANAILGVSLAVAKAAADASALPLYRYVGGVQAHVLPVPMMNIINGGVHADNPIDFQEFMILPVGAPSIAEAVRWGSEVFQLLKSSLKKAGHNTNVGDEGGFAPNLPSAEAALDFCVQAIEAAGFKPGVDIFLGLDCAATEFFKDGAYVYSGEGVTRSPEEQANYLAKLSASYPIASIEDGMSEDDWAGWKAVTELIGSKIQLVGDDLFVTNVTRLEEGIKKGIANSILVKVNQIGSLTETLAAVDMAQRAGYTAVMSHRSGETEDSTIADLAVATNCGQIKTGSLARSDRTAKYNQLIRIEEELGSQARYAGLKALKALA.

Q163 contributes to the (2R)-2-phosphoglycerate binding site. E205 serves as the catalytic Proton donor. The Mg(2+) site is built by D242, E285, and D312. Residues K337, R366, S367, and K388 each coordinate (2R)-2-phosphoglycerate. K337 acts as the Proton acceptor in catalysis.

This sequence belongs to the enolase family. Mg(2+) is required as a cofactor.

It localises to the cytoplasm. The protein localises to the secreted. Its subcellular location is the cell surface. It catalyses the reaction (2R)-2-phosphoglycerate = phosphoenolpyruvate + H2O. Its pathway is carbohydrate degradation; glycolysis; pyruvate from D-glyceraldehyde 3-phosphate: step 4/5. Functionally, catalyzes the reversible conversion of 2-phosphoglycerate (2-PG) into phosphoenolpyruvate (PEP). It is essential for the degradation of carbohydrates via glycolysis. The chain is Enolase from Methylocella silvestris (strain DSM 15510 / CIP 108128 / LMG 27833 / NCIMB 13906 / BL2).